The sequence spans 78 residues: High temperature lethal protein 1 (78 aa).

Position 2 is an N-acetylserine (Ser-2).

In terms of assembly, interacts directly with RSC8. Component of the two forms of the RSC complex composed of at least either RSC1 or RSC2, and ARP7, ARP9, LDB7, NPL6, RSC3, RSC30, RSC4, RSC58, RSC6, RSC8, RSC9, SFH1, STH1, HTL1 and probably RTT102. The complexes interact with histone and histone variant components of centromeric chromatin. Component of a fungal-specific module (HTL1-LDB7-NPL6-RSC3-RSC30) within the RSC complex.

It localises to the nucleus. Required for cell cycle progression through G2/M transition at temperatures higher than 33 degrees Celsius. Component of the chromatin structure-remodeling complex (RSC), which is involved in transcription regulation and nucleosome positioning. RSC is responsible for the transfer of a histone octamer from a nucleosome core particle to naked DNA. The reaction requires ATP and involves an activated RSC-nucleosome intermediate. Remodeling reaction also involves DNA translocation, DNA twist and conformational change. As a reconfigurer of centromeric and flanking nucleosomes, RSC complex is required both for proper kinetochore function in chromosome segregation and, via a PKC1-dependent signaling pathway, for organization of the cellular cytoskeleton. When associated with the RSC complex, may act coordinately with PKC1 to regulate G2/M transition. Together with LDB7, NPL6, RSC3, RSC30 components, defines a fungal-specific module within the RSC complex that plays a role in many cellular functions including the maintenance of cell wall integrity. The polypeptide is High temperature lethal protein 1 (HTL1) (Saccharomyces cerevisiae (strain ATCC 204508 / S288c) (Baker's yeast)).